Consider the following 245-residue polypeptide: MIKLVLIRHGQSLWNLENRFTGWTDVDLSENGLSEAREAGAILKKNGYTFDVAYTSVLKRAIRTLWIVLHEMNLAWVPVHKSWKLNERHYGALQGLNKDETAQKYGEEQVHIWRRSIDVRPPALTEDDPRYEMNDPRYKTLKKGEFPLTECLVDTEKRVLAYWHSEIAPKLKDGNKVIISSHGNTIRSLVKYLDNLSSDGVVSLNIPTSIPLVYELDENLRPIRHYYLSMDGEVPEGEIPKHITF.

Substrate is bound by residues Arg8–Asn15, Thr21–Gly22, Arg60, Glu87–Tyr90, Lys98, Arg114–Arg115, and Gly183–Asn184. Residue His9 is the Tele-phosphohistidine intermediate of the active site. Glu87 acts as the Proton donor/acceptor in catalysis.

It belongs to the phosphoglycerate mutase family. BPG-dependent PGAM subfamily.

The catalysed reaction is (2R)-2-phosphoglycerate = (2R)-3-phosphoglycerate. It functions in the pathway carbohydrate degradation; glycolysis; pyruvate from D-glyceraldehyde 3-phosphate: step 3/5. Functionally, catalyzes the interconversion of 2-phosphoglycerate and 3-phosphoglycerate. This Bacillus thuringiensis subsp. konkukian (strain 97-27) protein is 2,3-bisphosphoglycerate-dependent phosphoglycerate mutase.